We begin with the raw amino-acid sequence, 283 residues long: Bifunctional protein FolD (283 aa).

NADP(+) is bound by residues 165–167 (GAS) and Ser190.

This sequence belongs to the tetrahydrofolate dehydrogenase/cyclohydrolase family. In terms of assembly, homodimer.

It catalyses the reaction (6R)-5,10-methylene-5,6,7,8-tetrahydrofolate + NADP(+) = (6R)-5,10-methenyltetrahydrofolate + NADPH. It carries out the reaction (6R)-5,10-methenyltetrahydrofolate + H2O = (6R)-10-formyltetrahydrofolate + H(+). The protein operates within one-carbon metabolism; tetrahydrofolate interconversion. Catalyzes the oxidation of 5,10-methylenetetrahydrofolate to 5,10-methenyltetrahydrofolate and then the hydrolysis of 5,10-methenyltetrahydrofolate to 10-formyltetrahydrofolate. This Cupriavidus taiwanensis (strain DSM 17343 / BCRC 17206 / CCUG 44338 / CIP 107171 / LMG 19424 / R1) (Ralstonia taiwanensis (strain LMG 19424)) protein is Bifunctional protein FolD.